The sequence spans 230 residues: Large ribosomal subunit protein uL1 (230 aa).

The protein belongs to the universal ribosomal protein uL1 family. In terms of assembly, part of the 50S ribosomal subunit.

Binds directly to 23S rRNA. The L1 stalk is quite mobile in the ribosome, and is involved in E site tRNA release. Functionally, protein L1 is also a translational repressor protein, it controls the translation of the L11 operon by binding to its mRNA. The protein is Large ribosomal subunit protein uL1 of Gluconobacter oxydans (strain 621H) (Gluconobacter suboxydans).